The chain runs to 945 residues: Splicing factor, suppressor of white-apricot homolog (945 aa).

Disordered stretches follow at residues 1 to 28 (MYGA…GTGT) and 156 to 185 (DYYD…EENE). Basic and acidic residues-rich tracts occupy residues 9-21 (AKPE…KEEA) and 169-178 (PSKQREKNEA). The SURP motif 1 repeat unit spans residues 211 to 253 (IIERTANFVCKQGAQFEIMLKAKQARNSQFDFLRFDHYLNPYY). The segment at 271–301 (SKNEEKKKSGPTSDNEEEDDEEDGSYLHPSL) is disordered. Ser-283 carries the phosphoserine modification. Acidic residues predominate over residues 284 to 294 (DNEEEDDEEDG). Lys-315 is subject to N6-acetyllysine. Disordered regions lie at residues 332–355 (KAQA…PSQV) and 403–448 (SSSP…PVAI). Low complexity predominate over residues 335-352 (ADSSAPAPPTADGTPAQP). Pro residues predominate over residues 412-426 (VPPPPGTTPPPPPTT). Residues 427–447 (AEPSSGVTSTTTTTSALAPVA) show a composition bias toward low complexity. One copy of the SURP motif 2 repeat lies at 458–498 (VIDKLAEYVARNGLKFETSVRAKNDQRFEFLQPWHQYNAYY). Disordered stretches follow at residues 512–564 (GSTQ…KSTV), 589–680 (PLEK…QAER), and 712–921 (DTGV…VQSK). The segment covering 514-527 (TQAASTAEEAPTET) has biased composition (low complexity). A compositionally biased stretch (acidic residues) spans 528-540 (AVEESGEAGEDGA). Over residues 589–598 (PLEKNRVKLD) the composition is skewed to basic and acidic residues. Phosphoserine is present on residues Ser-601 and Ser-621. Residues 615-630 (SSVANPSPAAAPPSVA) show a composition bias toward low complexity. Residues 632 to 686 (EEKKPQLTQEELEAKQAKQKLEDRLAAAAREKLAQASKESKEKQLQAERKRKAAL) adopt a coiled-coil conformation. Position 639 is a phosphothreonine (Thr-639). Basic and acidic residues-rich tracts occupy residues 643-679 (LEAK…LQAE) and 733-752 (KPPE…EERE). 2 stretches are compositionally biased toward basic residues: residues 753–787 (KKKK…KAKH) and 795–810 (TVRR…RRRA). Positions 811-821 (HSPERRREERS) are enriched in basic and acidic residues. Phosphoserine is present on residues Ser-829 and Ser-831. Positions 835 to 861 (SRKRTRSRSPHEKKKKRRSRSRTKAKA) are enriched in basic residues. Positions 871–894 (QAAQRPSAHSAHSASISPVESRGS) are enriched in low complexity. Over residues 895-908 (SQERSRGVSQEKDG) the composition is skewed to basic and acidic residues. Residues Ser-899 and Ser-903 each carry the phosphoserine modification. Over residues 909–920 (QISSAIVSSVQS) the composition is skewed to low complexity.

It is found in the nucleus. Plays a role as an alternative splicing regulator. Regulates its own expression at the level of RNA processing. Also regulates the splicing of fibronectin and CD45 genes. May act, at least in part, by interaction with other R/S-containing splicing factors. Represses the splicing of MAPT/Tau exon 10. The sequence is that of Splicing factor, suppressor of white-apricot homolog (Sfswap) from Mus musculus (Mouse).